Reading from the N-terminus, the 258-residue chain is Phosphoprotein ECPP44 (258 aa).

3 disordered regions span residues 1–25 (MASDDSVPQHSVEKTTEYESSDRGL), 46–131 (EKVQ…PVEV), and 148–175 (KLPGGGKKVEEETVAPPPPPAAAPVDCA). Composition is skewed to basic and acidic residues over residues 11 to 25 (SVEKTTEYESSDRGL), 46 to 80 (EKVQVSEPEPKYEDCKVVEEEEEKAAKPSLLEKLH), 109 to 124 (GLKEKIEEKIHHKEED), and 148 to 158 (KLPGGGKKVEE).

It belongs to the plant dehydrin family. In terms of processing, phosphorylated in embryogenic and somatic embryos. Not phosphorylated in non-embryogenic cells.

Functionally, phosphorylation of ECCP44 protein is thought to be involved in the acquisition of embryogenic competence. Unlike other dehydrins, it is not thought to function as an environmental stress tolerant. This chain is Phosphoprotein ECPP44 (ECPP44), found in Daucus carota (Wild carrot).